The sequence spans 1035 residues: MGSFLSKLELSPSSPAQVRTDLPERPTKRRPPQPLHQVHRVQFVHRAHPAPRYRPVRRRPNLDPANPTTWLANEAWRRFPMKKSQNSPLGPLPSDWWESYLKRTIWSLRHPRPIWSPVTIRITPPDQRVPPSTSPEDVIALAGLPPSEELADPCSKETVLRALRECRKGKGRLEEPLFPESLDSKRRSPETRPSAFKPLMKNGTLTSFVPRPGPLKRSLHSWGSDHSLTKRPNCSSMSSLASIYRGGTLSSKRNAIGSSYSSCRNFSDPWKRSVPSVSFETPEWPIKKEKSCHRPSSPVPLVSDFESLGGSESSGQQNQKIPQLPSSPENLVSEIPPPQLGYAVSDENLTLGKKAELQVSNNAGEDTTEVNTDPFPETWLAIQPSLSLALPSSETDLTQGANPQLENLRKMQKSLGPLASPQSTGEATSVAHSPLKTPSLPTPPGCSQSELLPGTSPDSKPTATFILLTPTSPTLPVTDTTWPPSTSQADRSPMPPDPPAPPTIQSTLLGMVSSPTSHLSASAPPDATSAHLMLKPILGPLHNSEIGSSSYSRISVTAAASSISSLSTIQGTLTPTFKPIFGSIDPLKTTPMIAPFSSKQTPPPFTHASTHHFHGLVKATSVVMSTTLASTSKDSVFKPPLDFGVVNVTSAVGNTYSVPSTCDTFLLGTAQAFRADFTPATGFIFPPHHHPTIPTVHTVTMFTQVLSSVVQISPRSSTANFRGMGSPLPASALVSTNWLASTPSISNLTPAITSPLGSSSRPPFPLSQGANPQPAFGATNGQKQGPSQPALMPSVSSSFLFGSSAVALPTPMPTPAQPAFISTTQSALGCLTPSASTSQTPASTWSGIGGIPAGFPISQASTTGFRIVIQTHQSGAFGSVFGSRAPQPFTFGGFVTPMDCDESGIIMTGPDMSPTSGAFSIGALPSGTTNTMIPFGKGWSQNTEGLPSHRTAFSLGRGSISARKTMAPIAQNTPVPGQAKAGSSVGFGMPFPPAQGSVGRGPFRSSASSFSIGAKSKTPKNREKGHSRRHHAYKK.

Disordered regions lie at residues 1–37 (MGSF…PLHQ), 177–213 (LFPE…PRPG), 286–343 (IKKE…LGYA), 415–508 (LGPL…QSTL), 754–791 (SPLG…QPAL), and 972–1035 (NTPV…AYKK). A compositionally biased stretch (basic residues) spans 27-37 (TKRRPPQPLHQ). A compositionally biased stretch (low complexity) spans 309-319 (GGSESSGQQNQ). 3 stretches are compositionally biased toward polar residues: residues 320 to 330 (KIPQLPSSPEN), 420 to 431 (SPQSTGEATSVA), and 445 to 462 (GCSQ…SKPT). Over residues 464–481 (TFILLTPTSPTLPVTDTT) the composition is skewed to low complexity. Over residues 493 to 502 (PMPPDPPAPP) the composition is skewed to pro residues. Over residues 1000-1016 (RGPFRSSASSFSIGAKS) the composition is skewed to low complexity. Over residues 1017 to 1035 (KTPKNREKGHSRRHHAYKK) the composition is skewed to basic residues.

Belongs to the POM121 family.

The chain is POM121-like protein 2 (POM121L2) from Homo sapiens (Human).